Consider the following 101-residue polypeptide: Large ribosomal subunit protein uL24 (101 aa).

The protein belongs to the universal ribosomal protein uL24 family. As to quaternary structure, part of the 50S ribosomal subunit.

One of two assembly initiator proteins, it binds directly to the 5'-end of the 23S rRNA, where it nucleates assembly of the 50S subunit. In terms of biological role, one of the proteins that surrounds the polypeptide exit tunnel on the outside of the subunit. This is Large ribosomal subunit protein uL24 from Streptococcus pneumoniae (strain ATCC 700669 / Spain 23F-1).